The chain runs to 98 residues: Large ribosomal subunit protein uL23 (98 aa).

It belongs to the universal ribosomal protein uL23 family. In terms of assembly, part of the 50S ribosomal subunit. Contacts protein L29, and trigger factor when it is bound to the ribosome.

Its function is as follows. One of the early assembly proteins it binds 23S rRNA. One of the proteins that surrounds the polypeptide exit tunnel on the outside of the ribosome. Forms the main docking site for trigger factor binding to the ribosome. The sequence is that of Large ribosomal subunit protein uL23 from Bordetella petrii (strain ATCC BAA-461 / DSM 12804 / CCUG 43448).